Consider the following 50-residue polypeptide: Sperm protamine P1 (50 aa).

2 cysteine pairs are disulfide-bonded: C7–C15 and C39–C47.

It belongs to the protamine P1 family. As to quaternary structure, cross-linked by interchain disulfide bonds around the DNA-helix. As to expression, testis.

Its subcellular location is the nucleus. The protein resides in the chromosome. In terms of biological role, protamines substitute for histones in the chromatin of sperm during the haploid phase of spermatogenesis. They compact sperm DNA into a highly condensed, stable and inactive complex. The sequence is that of Sperm protamine P1 (PRM1) from Oryctolagus cuniculus (Rabbit).